The chain runs to 380 residues: Crotonobetainyl-CoA reductase (380 aa).

This sequence belongs to the acyl-CoA dehydrogenase family. As to quaternary structure, homotetramer. FAD is required as a cofactor.

The protein localises to the cytoplasm. It catalyses the reaction 4-(trimethylamino)butanoyl-CoA + oxidized [electron-transfer flavoprotein] + H(+) = crotonobetainyl-CoA + reduced [electron-transfer flavoprotein]. The protein operates within amine and polyamine metabolism; carnitine metabolism. Functionally, catalyzes the reduction of crotonobetainyl-CoA to gamma-butyrobetainyl-CoA. This is Crotonobetainyl-CoA reductase from Salmonella typhi.